The following is a 494-amino-acid chain: MALRVYNTLTGTKEDFVPIEPGKVKMYVCGVTVYDHCHIGHARANVVFDVIYRYLRSLGLEVNYVRNYTDIDDKIINRANREGVAYDAISERFIKEFDRDMAQLGLLLPTSQPKATEHIPEIITLVQTLIDKGFAYQMGGDVNFCVEKFDPYLKLSKRNLEDMQAGARIEVDERKRHPMDFVLWKEAKPGEPFWESPWGKGRPGWHIECSAMSMKYLGETFDIHGGGKDLVFPHHENEIAQSEAASGKPFVKYWLHNGFVNINSEKMSKSLGNFFTIKEVLDKYDSEVLRFFLLSAHYRSPLDFSDQNLTEAETGMERIYKALVAIDETLASNPATGGEEIDASSLGEAERELFDKSGSLPLRFREAMDDDFNTALAMGHIFDLVRCVNRVLSEAKERSNTLSALCAQVKANIGKIADVLGIFTSEPASLLTRLKDRKASELDISVEEIERLITERAAARKAKDFKRSDEIRDFLLGKNIVLLDSAQGTSWSVK.

Cys29 contacts Zn(2+). The short motif at 31–41 (VTVYDHCHIGH) is the 'HIGH' region element. Residues Cys209, His234, and Glu238 each contribute to the Zn(2+) site. Positions 266–270 (KMSKS) match the 'KMSKS' region motif. Lys269 contacts ATP.

It belongs to the class-I aminoacyl-tRNA synthetase family. In terms of assembly, monomer. It depends on Zn(2+) as a cofactor.

It is found in the cytoplasm. The catalysed reaction is tRNA(Cys) + L-cysteine + ATP = L-cysteinyl-tRNA(Cys) + AMP + diphosphate. This is Cysteine--tRNA ligase from Geotalea uraniireducens (strain Rf4) (Geobacter uraniireducens).